We begin with the raw amino-acid sequence, 291 residues long: ATP synthase gamma chain (291 aa).

The protein belongs to the ATPase gamma chain family. F-type ATPases have 2 components, CF(1) - the catalytic core - and CF(0) - the membrane proton channel. CF(1) has five subunits: alpha(3), beta(3), gamma(1), delta(1), epsilon(1). CF(0) has three main subunits: a, b and c.

The protein localises to the cell membrane. Its function is as follows. Produces ATP from ADP in the presence of a proton gradient across the membrane. The gamma chain is believed to be important in regulating ATPase activity and the flow of protons through the CF(0) complex. This Streptococcus pyogenes serotype M49 (strain NZ131) protein is ATP synthase gamma chain.